The chain runs to 61 residues: Large ribosomal subunit protein eL37 (61 aa).

Zn(2+) contacts are provided by Cys-19, Cys-22, Cys-34, and Cys-37. The C4-type zinc finger occupies 19–37; it reads CRRCGRNSFNVRKGYCAAC.

Belongs to the eukaryotic ribosomal protein eL37 family. Requires Zn(2+) as cofactor.

Its function is as follows. Binds to the 23S rRNA. The sequence is that of Large ribosomal subunit protein eL37 (rpl37e) from Sulfurisphaera tokodaii (strain DSM 16993 / JCM 10545 / NBRC 100140 / 7) (Sulfolobus tokodaii).